The sequence spans 354 residues: Protein-arginine kinase (354 aa).

The Phosphagen kinase C-terminal domain maps to 24-254 (IVLSSRIRLA…QQIIHQEKTA (231 aa)). Residues 27-31 (SSRIR), His-92, Arg-125, 176-180 (RASVM), and 207-212 (RGIYGE) contribute to the ATP site. The RDXXRA motif of the pArg binding pocket involved in allosteric regulation motif lies at 337-342 (RDYRRA).

This sequence belongs to the ATP:guanido phosphotransferase family.

The enzyme catalyses L-arginyl-[protein] + ATP = N(omega)-phospho-L-arginyl-[protein] + ADP + H(+). Appears to be allosterically activated by the binding of pArg-containing polypeptides to the pArg-binding pocket localized in the C-terminal domain of McsB. In terms of biological role, catalyzes the specific phosphorylation of arginine residues in a large number of proteins. Is part of the bacterial stress response system. Protein arginine phosphorylation has a physiologically important role and is involved in the regulation of many critical cellular processes, such as protein homeostasis, motility, competence, and stringent and stress responses, by regulating gene expression and protein activity. This chain is Protein-arginine kinase, found in Bacillus mycoides (strain KBAB4) (Bacillus weihenstephanensis).